A 150-amino-acid polypeptide reads, in one-letter code: Catabolic 3-dehydroquinase 2 (150 aa).

Tyr-23 (proton acceptor) is an active-site residue. Substrate-binding residues include Asn-74, His-80, and Asp-87. His-100 functions as the Proton donor in the catalytic mechanism. Substrate-binding positions include 101 to 102 (IT) and Arg-111.

Belongs to the type-II 3-dehydroquinase family. Homododecamer. Adopts a ring-like structure, composed of an arrangement of two hexameric rings stacked on top of one another.

The catalysed reaction is 3-dehydroquinate = 3-dehydroshikimate + H2O. Its pathway is aromatic compound metabolism; 3,4-dihydroxybenzoate biosynthesis; 3,4-dihydroxybenzoate from 3-dehydroquinate: step 1/2. Its function is as follows. Is involved in the catabolism of quinate. Allows the utilization of quinate as carbon source via the beta-ketoadipate pathway. This is Catabolic 3-dehydroquinase 2 from Aspergillus fumigatus (strain ATCC MYA-4609 / CBS 101355 / FGSC A1100 / Af293) (Neosartorya fumigata).